The chain runs to 276 residues: UPF0328 protein ECU04_0100 (276 aa).

The interval 1–24 is disordered; that stretch reads MGIIDVQRSHLTATPSKERDAPAH.

It belongs to the UPF0328 family.

The protein is UPF0328 protein ECU04_0100 of Encephalitozoon cuniculi (strain GB-M1) (Microsporidian parasite).